The following is a 145-amino-acid chain: D-aminoacyl-tRNA deacylase (145 aa).

The Gly-cisPro motif, important for rejection of L-amino acids signature appears at 137–138 (GP).

This sequence belongs to the DTD family. As to quaternary structure, homodimer.

It is found in the cytoplasm. It carries out the reaction glycyl-tRNA(Ala) + H2O = tRNA(Ala) + glycine + H(+). The enzyme catalyses a D-aminoacyl-tRNA + H2O = a tRNA + a D-alpha-amino acid + H(+). Its function is as follows. An aminoacyl-tRNA editing enzyme that deacylates mischarged D-aminoacyl-tRNAs. Also deacylates mischarged glycyl-tRNA(Ala), protecting cells against glycine mischarging by AlaRS. Acts via tRNA-based rather than protein-based catalysis; rejects L-amino acids rather than detecting D-amino acids in the active site. By recycling D-aminoacyl-tRNA to D-amino acids and free tRNA molecules, this enzyme counteracts the toxicity associated with the formation of D-aminoacyl-tRNA entities in vivo and helps enforce protein L-homochirality. The protein is D-aminoacyl-tRNA deacylase of Klebsiella pneumoniae subsp. pneumoniae (strain ATCC 700721 / MGH 78578).